A 445-amino-acid chain; its full sequence is Pre-B-cell leukemia transcription factor 2 (445 aa).

The tract at residues 13–44 (VGIPGLPIHGGPQTLTPHPMHEPPTDNGEPRK) is disordered. A compositionally biased stretch (basic and acidic residues) spans 31-44 (PMHEPPTDNGEPRK). The region spanning 42 to 236 (PRKQDIGDIL…VMILRSRFLD (195 aa)) is the PBC domain. The PBC-A stretch occupies residues 49 to 128 (DILQQIMTIT…EGVAGPEKGG (80 aa)). A PBC-B region spans residues 131 to 236 (AAAAAAAAAS…VMILRSRFLD (106 aa)). The homeobox; TALE-type DNA-binding region spans 237–299 (ARRKRRNFSK…NKRIRYKKNI (63 aa)). The segment covering 319 to 332 (QGGHSGANSPTTPT) has biased composition (polar residues). The interval 319–338 (QGGHSGANSPTTPTSAGSGG) is disordered.

This sequence belongs to the TALE/PBX homeobox family.

The protein resides in the nucleus. Functionally, transcriptional activator that binds the sequence 5'-ATCAATCAA-3'. This Xenopus laevis (African clawed frog) protein is Pre-B-cell leukemia transcription factor 2 (pbx2).